The sequence spans 956 residues: Pyruvate, phosphate dikinase, chloroplastic (956 aa).

A chloroplast-targeting transit peptide spans 1–79; it reads MMSSLFVEGM…AVLNPVSPPV (79 aa). Position 536 is a phosphothreonine; by PDRP1 (threonine 536). Histidine 538 acts as the Tele-phosphohistidine intermediate in catalysis. Arginine 644, arginine 701, glutamate 830, glycine 851, threonine 852, asparagine 853, and aspartate 854 together coordinate substrate. Glutamate 830 serves as a coordination point for Mg(2+). Residue aspartate 854 participates in Mg(2+) binding. Cysteine 916 (proton donor) is an active-site residue.

It belongs to the PEP-utilizing enzyme family. Homotetramer. It depends on Mg(2+) as a cofactor. Phosphorylation of Thr-536 in the dark inactivates the enzyme. Dephosphorylation upon light stimulation reactivates the enzyme.

The protein resides in the plastid. It is found in the chloroplast. The enzyme catalyses pyruvate + phosphate + ATP = phosphoenolpyruvate + AMP + diphosphate + H(+). With respect to regulation, activated by light-induced dephosphorylation. Inhibited by dark-induced phosphorylation. Both reactions are catalyzed by PDRP1. Functionally, formation of phosphoenolpyruvate. The chain is Pyruvate, phosphate dikinase, chloroplastic (PPDK) from Flaveria pringlei.